The sequence spans 411 residues: Glycogen synthase kinase-3 homolog MsK-3 (411 aa).

A Protein kinase domain is found at Y74–Y358. ATP contacts are provided by residues V80–V88 and K103. Residue D199 is the Proton acceptor of the active site. Phosphotyrosine is present on Y234.

This sequence belongs to the protein kinase superfamily. CMGC Ser/Thr protein kinase family. GSK-3 subfamily. Absent in leaves and petioles, very low levels are seen in the stems and roots while a moderate expression is seen in the nodes.

The enzyme catalyses L-seryl-[protein] + ATP = O-phospho-L-seryl-[protein] + ADP + H(+). It carries out the reaction L-threonyl-[protein] + ATP = O-phospho-L-threonyl-[protein] + ADP + H(+). This Medicago sativa (Alfalfa) protein is Glycogen synthase kinase-3 homolog MsK-3 (MSK-3).